We begin with the raw amino-acid sequence, 638 residues long: LEAF RUST 10 DISEASE-RESISTANCE LOCUS RECEPTOR-LIKE PROTEIN KINASE-like 2.1 (638 aa).

Positions 1 to 29 (MINLSLYQTNSLSYTIIWMLFVIPSCVLS) are cleaved as a signal peptide. Over 30-264 (VDERQKHCSP…EHTCGKMGIG (235 aa)) the chain is Extracellular. N-linked (GlcNAc...) asparagine glycans are attached at residues Asn69, Asn114, Asn136, Asn204, and Asn239. The helical transmembrane segment at 265-285 (IGLGCGFLGATLITVCLLCFF) threads the bilayer. At 286 to 638 (FQKRRTSHHL…YTEVFIGSTS (353 aa)) the chain is on the cytoplasmic side. The Protein kinase domain occupies 321–609 (KLFSHTLGKG…VLEVPPKPSI (289 aa)). ATP-binding positions include 327–335 (LGKGGFGTV) and Lys349. A Phosphotyrosine modification is found at Tyr393. Residue Asp444 is the Proton acceptor of the active site. Thr484 carries the phosphothreonine modification.

This sequence belongs to the protein kinase superfamily. Ser/Thr protein kinase family.

Its subcellular location is the membrane. It carries out the reaction L-seryl-[protein] + ATP = O-phospho-L-seryl-[protein] + ADP + H(+). The enzyme catalyses L-threonyl-[protein] + ATP = O-phospho-L-threonyl-[protein] + ADP + H(+). The sequence is that of LEAF RUST 10 DISEASE-RESISTANCE LOCUS RECEPTOR-LIKE PROTEIN KINASE-like 2.1 from Arabidopsis thaliana (Mouse-ear cress).